We begin with the raw amino-acid sequence, 391 residues long: DNA-directed RNA polymerase I subunit RPA43 (391 aa).

Disordered regions lie at residues 1–27 (MANW…SGGS) and 220–391 (QKQV…KKSK). Over residues 288 to 299 (GRHKEKKKKKKR) the composition is skewed to basic residues. Positions 289–353 (RHKEKKKKKK…RDKQQDSAEI (65 aa)) form a coiled coil. Over residues 312 to 323 (MNNNSLQETALD) the composition is skewed to polar residues. Positions 336–345 (KEKKKKKKRD) are enriched in basic residues.

It belongs to the eukaryotic RPA43 RNA polymerase subunit family. In terms of assembly, component of the RNA polymerase I (Pol I) complex consisting of at least 13 subunits.

It localises to the nucleus. The protein localises to the nucleolus. Its function is as follows. DNA-dependent RNA polymerase catalyzes the transcription of DNA into RNA using the four ribonucleoside triphosphates as substrates. Component of RNA polymerase I which synthesizes ribosomal RNA precursors. May be involved in recruitment of Pol I to rDNA promoters. The chain is DNA-directed RNA polymerase I subunit RPA43 from Danio rerio (Zebrafish).